The following is a 304-amino-acid chain: MESLNLKNLTTESRNETTINIDKVSTLEMVKIMNDEDKKVANAVEKELPKIAKAIDMIAERIHRGGRLIYIGAGTSGRLGVLDASECPPTYGVSEELVQGIIAGGKEAIFRAKEGAEDSEELAVEDLKSKNITENDTIIGLAASGRTPYVIGGLRYADQIGALTVSVTCNENSDVAKEAYISIAPVVGPEVVTGSTRLKSGTAQKLVLNMISTGVMIKLGKVYGNLMVDLRATNEKLIERAKGIVCKATGINMEEATEALNKTDYDVKLAIFMMLSKLNKDEARIKLDKNKGYIAKALQEIDNK.

Residues I58 to K221 form the SIS domain. Residue E86 is the Proton donor of the active site. E117 is a catalytic residue.

The protein belongs to the GCKR-like family. MurNAc-6-P etherase subfamily. Homodimer.

It catalyses the reaction N-acetyl-D-muramate 6-phosphate + H2O = N-acetyl-D-glucosamine 6-phosphate + (R)-lactate. It functions in the pathway amino-sugar metabolism; N-acetylmuramate degradation. Specifically catalyzes the cleavage of the D-lactyl ether substituent of MurNAc 6-phosphate, producing GlcNAc 6-phosphate and D-lactate. The sequence is that of N-acetylmuramic acid 6-phosphate etherase from Clostridium beijerinckii (strain ATCC 51743 / NCIMB 8052) (Clostridium acetobutylicum).